A 59-amino-acid chain; its full sequence is UPF0337 protein MM_2677 (59 aa).

2 stretches are compositionally biased toward basic and acidic residues: residues 1–24 (MKEG…KESA) and 33–59 (MEAK…EFEK). The tract at residues 1–59 (MKEGTKEEMEGKFSKAKGEIKESAGEMTGDIEMEAKGEAEKRKGEAQEKVGKIRKEFEK) is disordered.

This sequence belongs to the UPF0337 (CsbD) family.

The sequence is that of UPF0337 protein MM_2677 from Methanosarcina mazei (strain ATCC BAA-159 / DSM 3647 / Goe1 / Go1 / JCM 11833 / OCM 88) (Methanosarcina frisia).